The following is a 269-amino-acid chain: Tryptophan synthase alpha chain (269 aa).

Residues Glu-49 and Asp-60 each act as proton acceptor in the active site.

The protein belongs to the TrpA family. In terms of assembly, tetramer of two alpha and two beta chains.

The enzyme catalyses (1S,2R)-1-C-(indol-3-yl)glycerol 3-phosphate + L-serine = D-glyceraldehyde 3-phosphate + L-tryptophan + H2O. It functions in the pathway amino-acid biosynthesis; L-tryptophan biosynthesis; L-tryptophan from chorismate: step 5/5. Functionally, the alpha subunit is responsible for the aldol cleavage of indoleglycerol phosphate to indole and glyceraldehyde 3-phosphate. This chain is Tryptophan synthase alpha chain, found in Klebsiella aerogenes (Enterobacter aerogenes).